We begin with the raw amino-acid sequence, 343 residues long: uncharacterized protein (343 aa).

The tract at residues 66 to 89 (TQNPEPTSASTPPSASASSLPNGA) is disordered. Positions 71-84 (PTSASTPPSASASS) are enriched in low complexity. The chain crosses the membrane as a helical span at residues 96–116 (GVIAGPIVGVLGGLIVLVIIF). 2 disordered regions span residues 161–191 (GGYQMHSTPWASSPRNSTIPQRSQSFYNDTR) and 252–343 (GRPL…SEHF). Over residues 165-188 (MHSTPWASSPRNSTIPQRSQSFYN) the composition is skewed to polar residues. Residues 280-289 (SNDDSDETKL) show a composition bias toward basic and acidic residues. The span at 290 to 299 (KQSSTESSSE) shows a compositional bias: low complexity. Composition is skewed to basic and acidic residues over residues 301–311 (LDEKDKFDKNS) and 322–333 (SSYEHEISEEHK). Residues 334–343 (KHSKKRSEHF) show a composition bias toward basic residues.

The protein resides in the golgi apparatus membrane. This is an uncharacterized protein from Schizosaccharomyces pombe (strain 972 / ATCC 24843) (Fission yeast).